A 480-amino-acid polypeptide reads, in one-letter code: Pyruvate kinase (480 aa).

Arginine 36 is a substrate binding site. K(+) is bound by residues asparagine 38, serine 40, and aspartate 70. An ATP-binding site is contributed by 38–41 (NFSH). ATP is bound by residues arginine 77 and lysine 160. Glutamate 225 contributes to the Mg(2+) binding site. Glycine 251, aspartate 252, and threonine 284 together coordinate substrate. Aspartate 252 provides a ligand contact to Mg(2+).

The protein belongs to the pyruvate kinase family. In terms of assembly, homotetramer. The cofactor is Mg(2+). Requires K(+) as cofactor.

It carries out the reaction pyruvate + ATP = phosphoenolpyruvate + ADP + H(+). It functions in the pathway carbohydrate degradation; glycolysis; pyruvate from D-glyceraldehyde 3-phosphate: step 5/5. With respect to regulation, allosterically activated by AMP and by several sugar phosphates. Belongs to type II PK. This chain is Pyruvate kinase (pykA), found in Buchnera aphidicola subsp. Acyrthosiphon pisum (strain APS) (Acyrthosiphon pisum symbiotic bacterium).